A 302-amino-acid chain; its full sequence is Ribose-5-phosphate isomerase (302 aa).

The protein belongs to the ribose 5-phosphate isomerase family.

It is found in the cytoplasm. The catalysed reaction is aldehydo-D-ribose 5-phosphate = D-ribulose 5-phosphate. It functions in the pathway carbohydrate degradation; pentose phosphate pathway; D-ribose 5-phosphate from D-ribulose 5-phosphate (non-oxidative stage): step 1/1. In Cryptococcus neoformans var. neoformans serotype D (strain B-3501A) (Filobasidiella neoformans), this protein is Ribose-5-phosphate isomerase (RKI1).